A 186-amino-acid chain; its full sequence is MSQVYSVAVVVGSLRKESYNRKVARALSELAPSSLALKIVEIGDLPLYNEDIEAEAPPETWKRFRDEIRRSDAVLFVTPEYNRSVPGCLKNAIDVGSRPYGQSAWSGKPTAVVSVSPGAIGGFGANHAVRQSLVFLDMPCMQMPEAYLGGAASLFEDSGKLNDKTRPFLQAFVDRFASWVKLNRAV.

Residues 13–20 (SLRKESYN), 80–83 (EYNR), and Ser-116 each bind FMN.

The protein belongs to the SsuE family. Homotetramer. Dimer of dimers. The tetrameric configuration has a central role in chromate reductase activity. FMN serves as cofactor.

It carries out the reaction a quinone + NADH + H(+) = a quinol + NAD(+). It catalyses the reaction a quinone + NADPH + H(+) = a quinol + NADP(+). The catalysed reaction is Cr(6+) + 2 NADH + O2 = Cr(3+) + superoxide + 2 NAD(+) + 2 H(+). The enzyme catalyses Cr(6+) + 2 NADPH + O2 = Cr(3+) + superoxide + 2 NADP(+) + 2 H(+). With respect to regulation, may be inhibited by divalent cations. Catalyzes the reduction of quinones. Acts by simultaneous two-electron transfer, avoiding formation of highly reactive semiquinone intermediates and producing quinols that promote tolerance of H(2)O(2). Quinone reduction is probably the primary biological role of ChrR. Can also reduce toxic chromate to insoluble and less toxic Cr(3+). Catalyzes the transfer of three electrons to Cr(6+) producing Cr(3+) and one electron to molecular oxygen. This reaction produces transiently a minimal amount of the toxic Cr(5+) species and reactive oxygen species (ROS). Chromate reduction protects the cell against chromate toxicity, but is likely a secondary activity. Can also reduce potassium ferricyanide and 2,6-dichloroindophenol. During chromate reduction, displays an eightfold preference for NADH over NADPH. In Pseudomonas putida (strain ATCC 47054 / DSM 6125 / CFBP 8728 / NCIMB 11950 / KT2440), this protein is Quinone reductase.